The following is a 207-amino-acid chain: NADH-quinone oxidoreductase subunit A (207 aa).

Transmembrane regions (helical) follow at residues 6-26 (LSAIAFILAAIGLVVFMLVVP), 62-82 (LVAIFFVIFDLEALYLYAYAV), and 87-107 (AGWLGFAAAAIFITILIIGLV).

Belongs to the complex I subunit 3 family. As to quaternary structure, NDH-1 is composed of 14 different subunits. Subunits NuoA, H, J, K, L, M, N constitute the membrane sector of the complex.

The protein resides in the cell inner membrane. It catalyses the reaction a quinone + NADH + 5 H(+)(in) = a quinol + NAD(+) + 4 H(+)(out). NDH-1 shuttles electrons from NADH, via FMN and iron-sulfur (Fe-S) centers, to quinones in the respiratory chain. The immediate electron acceptor for the enzyme in this species is believed to be ubiquinone. Couples the redox reaction to proton translocation (for every two electrons transferred, four hydrogen ions are translocated across the cytoplasmic membrane), and thus conserves the redox energy in a proton gradient. This Psychrobacter cryohalolentis (strain ATCC BAA-1226 / DSM 17306 / VKM B-2378 / K5) protein is NADH-quinone oxidoreductase subunit A.